A 256-amino-acid chain; its full sequence is Trans-aconitate 2-methyltransferase (256 aa).

The protein belongs to the methyltransferase superfamily. Tam family.

The protein resides in the cytoplasm. It catalyses the reaction trans-aconitate + S-adenosyl-L-methionine = (E)-3-(methoxycarbonyl)pent-2-enedioate + S-adenosyl-L-homocysteine. Its function is as follows. Catalyzes the S-adenosylmethionine monomethyl esterification of trans-aconitate. The polypeptide is Trans-aconitate 2-methyltransferase (Rhodopseudomonas palustris (strain BisA53)).